Consider the following 331-residue polypeptide: Ketol-acid reductoisomerase (NADP(+)) (331 aa).

Residues 2-182 form the KARI N-terminal Rossmann domain; that stretch reads ARMYYDSDAN…GGTRAGILET (181 aa). NADP(+)-binding positions include 25-28, Ser51, Ser53, and 83-86; these read YGSQ and DEVQ. The active site involves His108. Position 134 (Gly134) interacts with NADP(+). A KARI C-terminal knotted domain is found at 183 to 328; the sequence is TFREETETDL…KDLRAMFSWL (146 aa). Residues Asp191, Glu195, Glu227, and Glu231 each contribute to the Mg(2+) site. A substrate-binding site is contributed by Ser252.

Belongs to the ketol-acid reductoisomerase family. Mg(2+) is required as a cofactor.

The enzyme catalyses (2R)-2,3-dihydroxy-3-methylbutanoate + NADP(+) = (2S)-2-acetolactate + NADPH + H(+). It carries out the reaction (2R,3R)-2,3-dihydroxy-3-methylpentanoate + NADP(+) = (S)-2-ethyl-2-hydroxy-3-oxobutanoate + NADPH + H(+). It functions in the pathway amino-acid biosynthesis; L-isoleucine biosynthesis; L-isoleucine from 2-oxobutanoate: step 2/4. The protein operates within amino-acid biosynthesis; L-valine biosynthesis; L-valine from pyruvate: step 2/4. Its function is as follows. Involved in the biosynthesis of branched-chain amino acids (BCAA). Catalyzes an alkyl-migration followed by a ketol-acid reduction of (S)-2-acetolactate (S2AL) to yield (R)-2,3-dihydroxy-isovalerate. In the isomerase reaction, S2AL is rearranged via a Mg-dependent methyl migration to produce 3-hydroxy-3-methyl-2-ketobutyrate (HMKB). In the reductase reaction, this 2-ketoacid undergoes a metal-dependent reduction by NADPH to yield (R)-2,3-dihydroxy-isovalerate. The sequence is that of Ketol-acid reductoisomerase (NADP(+)) from Trichodesmium erythraeum (strain IMS101).